A 269-amino-acid chain; its full sequence is Diaminopimelate epimerase (269 aa).

Residues Asn13, Gln47, and Asn65 each contribute to the substrate site. The active-site Proton donor is Cys74. Substrate-binding positions include 75–76 (GN), Asn149, Asn182, and 200–201 (ER). Residue Cys209 is the Proton acceptor of the active site. 210-211 (GT) contacts substrate.

This sequence belongs to the diaminopimelate epimerase family. As to quaternary structure, homodimer.

Its subcellular location is the cytoplasm. It carries out the reaction (2S,6S)-2,6-diaminopimelate = meso-2,6-diaminopimelate. It functions in the pathway amino-acid biosynthesis; L-lysine biosynthesis via DAP pathway; DL-2,6-diaminopimelate from LL-2,6-diaminopimelate: step 1/1. In terms of biological role, catalyzes the stereoinversion of LL-2,6-diaminopimelate (L,L-DAP) to meso-diaminopimelate (meso-DAP), a precursor of L-lysine and an essential component of the bacterial peptidoglycan. The chain is Diaminopimelate epimerase from Erythrobacter litoralis (strain HTCC2594).